The primary structure comprises 68 residues: Copper transport protein ATOX1 (68 aa).

Residues 1-63 (MPKHEFSVDM…TLNKTGKAVS (63 aa)) form the HMA domain. The Cu cation site is built by Cys-12 and Cys-15. The residue at position 47 (Ser-47) is a Phosphoserine. Lys-60 is modified (N6-acetyllysine).

The protein belongs to the ATX1 family. As to quaternary structure, homodimer. Interacts with ATP7B. Interacts with ATP7A. Interacts (via dimer form) with SLC31A1 (via C-terminal domain); this interaction improves ATOX1 stability and controls intracellular Cu(I) levels.

In terms of biological role, binds and deliver cytosolic copper to the copper ATPase proteins. May be important in cellular antioxidant defense. This Mus musculus (Mouse) protein is Copper transport protein ATOX1.